Consider the following 779-residue polypeptide: MNNKILEQLEFNKVKELILPYLKTEQSQEELSELEPMTEAPKIEKSFNEISDMEQIFVEHHSFGIVSLSSISESLKRLELSADLNIQELLVIKKVLQSSSDMIHFYSDLDNVSFQSLDRLFENLEQFPNLQGSFQAINDGGFLEHFASPELERIRRQLTNSERRVRQILQDMLKEKAELLSENLIASRSGRSVLPVKNTYRNRISGVVHDISSSGSTVYIEPRAVVTLNEEITQLRADERHEESRILHAFSDLLRPHVATIRNNAWILGHLDFVRAKYLFMSDNKATIPEISNDSTLALINVRHPLLSNPVANDLHFDQDLTAIVITGPNTGGKTIMLKTLGLAQLMGQSGLPVLADKGSKIAVFNNIFADIGDEQSIEQSLSTFSSHMTHIVSILNEADHNSLVLFDELGAGTDPQEGASLAMAILEHLRLSNIKTMATTHYPELKAYGIETNFVENASMEFDAETLSPTYRFMQGVPGRSNAFEIASRLGLAPFIVKQAKQMTDSDSDVNRIIEQLEAQTLETRRRLDHIKEIEQENLKFNRAVKKLYNEFSHERDKELEKIYQEAQEIVDMALNESDTILKKLNDKSQLKPHEIIDAKAQIKKLAPQVDLSKNKVLNKAKKIKAARAPRIGDDIIVTSYGQRGTLTSQLKDGRWEAQVGIIKMTLTQDEFTLVRVQEEQKVKSKQINVVKKADSSGPRARLDLRGKRYEEAMQELDNFIDQALLNNMGQVDIIHGIGTGVIREGVTKYLRRNKHVKHFAYAPQNAGGSGATIVTLG.

328 to 335 (GPNTGGKT) serves as a coordination point for ATP. The 76-residue stretch at 704-779 (LDLRGKRYEE…GSGATIVTLG (76 aa)) folds into the Smr domain.

This sequence belongs to the DNA mismatch repair MutS family. MutS2 subfamily. Homodimer. Binds to stalled ribosomes, contacting rRNA.

In terms of biological role, endonuclease that is involved in the suppression of homologous recombination and thus may have a key role in the control of bacterial genetic diversity. Functionally, acts as a ribosome collision sensor, splitting the ribosome into its 2 subunits. Detects stalled/collided 70S ribosomes which it binds and splits by an ATP-hydrolysis driven conformational change. Acts upstream of the ribosome quality control system (RQC), a ribosome-associated complex that mediates the extraction of incompletely synthesized nascent chains from stalled ribosomes and their subsequent degradation. Probably generates substrates for RQC. This is Endonuclease MutS2 from Streptococcus agalactiae serotype III (strain NEM316).